A 572-amino-acid polypeptide reads, in one-letter code: MPVYCKYQFHKTPVHKTKGEPHGTHVYFQDINVIFLGALHPSDLREYLEGPPMVVEVHDRDRKSEECSQKPVLFGEDPLDSYLNFQALISPRETENNPFESQNKMWYPYGIAQVSFADLLLGHKYLNLAVPIHSCEVQPTHCGQDSRRRKVVGLGVPRDGHQHGPMPRGNYLEADSQLKLRVDIAVPLRAGARAADPDLGGSQFGRIIFVFDFKKVSLLHSLLQDITMINAKALGLDSYPVRTLQQILSAFKVRVRVQEQQHLDVLTGFHLLDGKTHLFILEGLADQGLRQLWENHQSWIPRSEHRKYKVLYNSQLLFRSRLYGDLEAILYHVHLFQPTELLLQQAVFFLRDTERRRVFQALARIHDICYNSTTLWDVTVRDLLPSSAMIKDLSQEFGMPLSQEELTDEKLFALPPQPAPNLEDYHSRNSTLTLEIHAHQEPRKRFTYSQDYLSAMVEPLDLKEEEKKAQKKSRQAWLTARGFQVTGLQSDTESSFQDLKLPPIKELNEEWKENSLFANVLEPVLDRDRWSWDRHHVDFDLYKKPPPFLELLPSPAPKPVTVRKKKGNSPIS.

The disordered stretch occupies residues 553–572 (PSPAPKPVTVRKKKGNSPIS). A compositionally biased stretch (basic residues) spans 561–572 (TVRKKKGNSPIS).

This is an uncharacterized protein from Homo sapiens (Human).